A 94-amino-acid chain; its full sequence is Phosphoribosyl-ATP pyrophosphatase (94 aa).

It belongs to the PRA-PH family.

It is found in the cytoplasm. It catalyses the reaction 1-(5-phospho-beta-D-ribosyl)-ATP + H2O = 1-(5-phospho-beta-D-ribosyl)-5'-AMP + diphosphate + H(+). It functions in the pathway amino-acid biosynthesis; L-histidine biosynthesis; L-histidine from 5-phospho-alpha-D-ribose 1-diphosphate: step 2/9. The protein is Phosphoribosyl-ATP pyrophosphatase of Saccharolobus islandicus (strain Y.N.15.51 / Yellowstone #2) (Sulfolobus islandicus).